Here is a 193-residue protein sequence, read N- to C-terminus: Rho-related GTP-binding protein RhoC (193 aa).

12–19 contacts GTP; it reads GDGACGKT. The Effector region motif lies at 34-42; it reads YVPTVFENY. Position 41 is an ADP-ribosylasparagine; by botulinum toxin (N41). Residues 59-63 and 117-120 each bind GTP; these read DTAGQ and NKKD. C190 bears the Cysteine methyl ester mark. C190 carries S-geranylgeranyl cysteine lipidation. The propeptide at 191-193 is removed in mature form; the sequence is PLL.

Belongs to the small GTPase superfamily. Rho family.

It localises to the cell membrane. The protein localises to the cleavage furrow. Its function is as follows. Regulates a signal transduction pathway linking plasma membrane receptors to the assembly of focal adhesions and actin stress fibers. Serves as a microtubule-dependent signal that is required for the myosin contractile ring formation during cell cycle cytokinesis. Regulates apical junction formation in bronchial epithelial cells. The chain is Rho-related GTP-binding protein RhoC (RHOC) from Gallus gallus (Chicken).